The following is a 188-amino-acid chain: dCTP deaminase (188 aa).

DCTP is bound at residue 107–112; the sequence is KSTYAR. Glu133 serves as the catalytic Proton donor/acceptor. DCTP contacts are provided by Gln152, Tyr166, and Gln176.

The protein belongs to the dCTP deaminase family. As to quaternary structure, homotrimer.

The enzyme catalyses dCTP + H2O + H(+) = dUTP + NH4(+). Its pathway is pyrimidine metabolism; dUMP biosynthesis; dUMP from dCTP (dUTP route): step 1/2. Catalyzes the deamination of dCTP to dUTP. The protein is dCTP deaminase of Sulfurovum sp. (strain NBC37-1).